A 569-amino-acid polypeptide reads, in one-letter code: MKLCRWYIALFLLPVCLQSQKLPTRDEELFQMQIRDKALFHDSSVIPDGAEISGYLFRDNPKRYFFVVEEDNTPLSVIVTPCDAPLEWKLTLQELPEEASGEGSGEPEPLEEQKQQIVNEEGTELFSYKGNDVEYFVSSSSPSGLYQLELISTEKDTHFKVYATTTPESDQPYPELPYDPRVDVTSLGRTTITLAWKPTPTSSVMKQPIQYCVVINKEHNFKSICAVEAKMIADDAFMMAPKPGIDFNPFDFAHFGFQSDNSAGKDRNFMPKVSSSKMLRQITKPKVDIQKFCIGNKNIFTVSDLKPDTQYYFDVFAVNAVTNMSTAYVGTFARTKEEAKQKTVELKDGKVTDVFIKRKGTKFLRFSPVSSHQKVTFSVHSCLDAIQIQVRRDGKLLLSQSVEGVRQFQLRGKPKAKYLIRLKGSKKGASMLKILATSKFNKQPFPSLPEDTRIKAFDKLRTCSSATVAWLGTQERNKFCIYKKEVDDDYTEEHKKRDQNQCLGPDTRKKSEKVLCKYFHSQNIHKAVTTETIKGLQPGKSYMLDVYVMGHAGHSVKYQSKIVKTRKFC.

An N-terminal signal peptide occupies residues 1–19; the sequence is MKLCRWYIALFLLPVCLQS. Fibronectin type-III domains follow at residues 261–332 and 446–565; these read NSAG…VGTF and PSLP…IVKT. N-linked (GlcNAc...) asparagine glycosylation occurs at Asn-323.

Its subcellular location is the secreted. Functionally, secretory protein that plays a role in various cellular processes. Acts as a chemorepellent acting on gonadotropin-releasing hormone (GnRH) expressing neurons regulating their migration to the hypothalamus. Also promotes neuron migration, growth and survival as well as neurite outgrowth and is involved in the development of the olfactory system. May also act through the regulation of growth factors activity and downstream signaling. Also regulates extracellular matrix assembly and cell adhesiveness. Promotes endothelial cell survival, vessel formation and plays an important role in the process of revascularization through NOS3-dependent mechanisms. This chain is Protein NDNF (ndnf), found in Xenopus laevis (African clawed frog).